Here is a 238-residue protein sequence, read N- to C-terminus: Ion-translocating oxidoreductase complex subunit E (238 aa).

6 consecutive transmembrane segments (helical) span residues alanine 24–valine 44, leucine 52–methionine 72, valine 84–methionine 104, glutamate 106–glycine 126, isoleucine 141–isoleucine 161, and glycine 195–alanine 215.

This sequence belongs to the NqrDE/RnfAE family. As to quaternary structure, the complex is composed of six subunits: RnfA, RnfB, RnfC, RnfD, RnfE and RnfG.

Its subcellular location is the cell inner membrane. Part of a membrane-bound complex that couples electron transfer with translocation of ions across the membrane. This chain is Ion-translocating oxidoreductase complex subunit E, found in Azotobacter vinelandii (strain DJ / ATCC BAA-1303).